The following is a 168-amino-acid chain: Cell division inhibitor SulA (168 aa).

A ftsZ binding region spans residues 105 to 111 (ALETGNY). The segment at 161–168 (RIHSRMVH) is lon protease binding.

This sequence belongs to the SulA family. In terms of assembly, interacts with FtsZ. Post-translationally, is rapidly cleaved and degraded by the Lon protease once DNA damage is repaired.

In terms of biological role, component of the SOS system and an inhibitor of cell division. Accumulation of SulA causes rapid cessation of cell division and the appearance of long, non-septate filaments. In the presence of GTP, binds a polymerization-competent form of FtsZ in a 1:1 ratio, thus inhibiting FtsZ polymerization and therefore preventing it from participating in the assembly of the Z ring. This mechanism prevents the premature segregation of damaged DNA to daughter cells during cell division. The protein is Cell division inhibitor SulA of Cronobacter turicensis (strain DSM 18703 / CCUG 55852 / LMG 23827 / z3032).